We begin with the raw amino-acid sequence, 229 residues long: Ribulose-phosphate 3-epimerase (229 aa).

Position 12 (serine 12) interacts with substrate. Positions 37, 39, and 70 each coordinate a divalent metal cation. The Proton acceptor role is filled by aspartate 39. Substrate contacts are provided by residues histidine 70, 146-149 (GFTG), 181-183 (DGG), and 203-204 (AS). Residue aspartate 181 participates in a divalent metal cation binding. The active-site Proton donor is the aspartate 181.

It belongs to the ribulose-phosphate 3-epimerase family. The cofactor is a divalent metal cation.

The catalysed reaction is D-ribulose 5-phosphate = D-xylulose 5-phosphate. The protein operates within carbohydrate degradation. Functionally, catalyzes the reversible epimerization of D-ribulose 5-phosphate to D-xylulose 5-phosphate. The sequence is that of Ribulose-phosphate 3-epimerase from Chlamydia pneumoniae (Chlamydophila pneumoniae).